A 221-amino-acid polypeptide reads, in one-letter code: Pectate lyase C (221 aa).

The first 28 residues, Met-1–Ala-28, serve as a signal peptide directing secretion.

It belongs to the polysaccharide lyase 3 family. It depends on Ca(2+) as a cofactor.

It localises to the secreted. It carries out the reaction Eliminative cleavage of (1-&gt;4)-alpha-D-galacturonan to give oligosaccharides with 4-deoxy-alpha-D-galact-4-enuronosyl groups at their non-reducing ends.. The catalysed reaction is Eliminative cleavage of (1-&gt;4)-alpha-D-galacturonan methyl ester to give oligosaccharides with 4-deoxy-6-O-methyl-alpha-D-galact-4-enuronosyl groups at their non-reducing ends.. Its pathway is glycan metabolism; pectin degradation; 2-dehydro-3-deoxy-D-gluconate from pectin: step 2/5. Functionally, catalyzes the depolymerization of both polygalacturonate and pectins of methyl esterification degree from 22 to 89%, with an endo mode of action. In contrast to the majority of pectate lyases, displays high activity on highly methylated pectins. In Bacillus licheniformis (strain ATCC 14580 / DSM 13 / JCM 2505 / CCUG 7422 / NBRC 12200 / NCIMB 9375 / NCTC 10341 / NRRL NRS-1264 / Gibson 46), this protein is Pectate lyase C (pelC).